Consider the following 150-residue polypeptide: UPF0039 protein C11D3.02c (150 aa).

Positions 9–150 (KYFNSLDVKE…IPHVEMRLEL (142 aa)) constitute an N-acetyltransferase domain.

Belongs to the UPF0039 (ElaA) family.

The protein is UPF0039 protein C11D3.02c of Schizosaccharomyces pombe (strain 972 / ATCC 24843) (Fission yeast).